The primary structure comprises 342 residues: MTQKIAILGASGYTGAELARIIATHPEMEITALSGDRKAGMRMGEVFPHLRHIGLPDLVKIEEIDFSGIDLAFCALPHATSQAVIAELPRDLKVVDLSADFRLRDAAEYEKWYGKPHAAMDLQAEAVYGLTEFYREELKTARLCAGTGCNAAAGQYAIRPLIEAGVIDLDEIVIDLKAGVSGAGRSLKENLLHAELAGGTMPYSAGGKHRHLGEFDQEFSKVAGRPVRVQFTPHLMPFNRGILATVYVRGTPEDIHAALASRYENEVFLEVLPFGQLASTRSVAGSNFVHLGVIGDRLPGRAVVTVALDNLTKGSSGQAIQNANLMLGLPETLGLMLAPVFP.

The active site involves C149.

This sequence belongs to the NAGSA dehydrogenase family. Type 1 subfamily.

It is found in the cytoplasm. It catalyses the reaction N-acetyl-L-glutamate 5-semialdehyde + phosphate + NADP(+) = N-acetyl-L-glutamyl 5-phosphate + NADPH + H(+). The protein operates within amino-acid biosynthesis; L-arginine biosynthesis; N(2)-acetyl-L-ornithine from L-glutamate: step 3/4. Functionally, catalyzes the NADPH-dependent reduction of N-acetyl-5-glutamyl phosphate to yield N-acetyl-L-glutamate 5-semialdehyde. This is N-acetyl-gamma-glutamyl-phosphate reductase from Rhodobacter capsulatus (strain ATCC BAA-309 / NBRC 16581 / SB1003).